We begin with the raw amino-acid sequence, 542 residues long: Chaperonin GroEL (542 aa).

ATP contacts are provided by residues 29–32 (TIGP), 86–90 (DGTTT), Gly-413, 477–479 (NAA), and Asp-493.

Belongs to the chaperonin (HSP60) family. Forms a cylinder of 14 subunits composed of two heptameric rings stacked back-to-back. Interacts with the co-chaperonin GroES.

Its subcellular location is the cytoplasm. The catalysed reaction is ATP + H2O + a folded polypeptide = ADP + phosphate + an unfolded polypeptide.. In terms of biological role, together with its co-chaperonin GroES, plays an essential role in assisting protein folding. The GroEL-GroES system forms a nano-cage that allows encapsulation of the non-native substrate proteins and provides a physical environment optimized to promote and accelerate protein folding. The sequence is that of Chaperonin GroEL from Lactobacillus acidophilus (strain ATCC 700396 / NCK56 / N2 / NCFM).